The following is a 381-amino-acid chain: Creatine kinase B-type (381 aa).

Ser-4 carries the phosphoserine modification. In terms of domain architecture, Phosphagen kinase N-terminal spans 11-98 (KLRFPAEDEF…FDPIIEERHG (88 aa)). Thr-35 carries the post-translational modification Phosphothreonine. A Glycyl lysine isopeptide (Lys-Gly) (interchain with G-Cter in ubiquitin) cross-link involves residue Lys-45. Val-72 is a creatine binding site. A compositionally biased stretch (basic and acidic residues) spans 96–110 (RHGGYQPSDEHKTDL). The interval 96–123 (RHGGYQPSDEHKTDLNPDNLQGGDDLDP) is disordered. A Glycyl lysine isopeptide (Lys-Gly) (interchain with G-Cter in ubiquitin) cross-link involves residue Lys-107. Phosphotyrosine is present on Tyr-125. One can recognise a Phosphagen kinase C-terminal domain in the interval 125–367 (YVLSSRVRTG…KLLIEMEQRL (243 aa)). ATP-binding positions include 128-132 (SSRVR), Arg-130, Arg-132, and His-191. The tract at residues 130–138 (RVRTGRSIR) is internal MTS-like signal. Ser-199 is subject to Phosphoserine. Position 232 (Glu-232) interacts with creatine. Residue Arg-236 coordinates ATP. Residue Tyr-269 is modified to 3'-nitrotyrosine. Ser-285 serves as a coordination point for creatine. Arg-292 is a binding site for ATP. Phosphoserine is present on Ser-309. Residues Arg-320, 320–325 (RGTGGV), and Asp-335 each bind ATP. At Thr-322 the chain carries Phosphothreonine. Residue Lys-381 forms a Glycyl lysine isopeptide (Lys-Gly) (interchain with G-Cter in ubiquitin) linkage.

The protein belongs to the ATP:guanido phosphotransferase family. Dimer of identical or non-identical chains, which can be either B (brain type) or M (muscle type). With MM being the major form in skeletal muscle and myocardium, MB existing in myocardium, and BB existing in many tissues, especially brain. Interacts with SLC12A6 (via C-terminus); the interaction may be required for SLC12A6 potassium-chloride cotransport activity. Post-translationally, ubiquitinated by the ECS(ASB9) complex, leading to its degradation by the proteasome. As to expression, expressed in hippocampus and corpus callosum (at protein level).

Its subcellular location is the cytoplasm. It is found in the cytosol. It localises to the mitochondrion. The protein resides in the cell membrane. It carries out the reaction creatine + ATP = N-phosphocreatine + ADP + H(+). Its function is as follows. Reversibly catalyzes the transfer of phosphate between ATP and various phosphogens (e.g. creatine phosphate). Creatine kinase isoenzymes play a central role in energy transduction in tissues with large, fluctuating energy demands, such as skeletal muscle, heart, brain and spermatozoa. Acts as a key regulator of adaptive thermogenesis as part of the futile creatine cycle: localizes to the mitochondria of thermogenic fat cells and acts by mediating phosphorylation of creatine to initiate a futile cycle of creatine phosphorylation and dephosphorylation. During the futile creatine cycle, creatine and N-phosphocreatine are in a futile cycle, which dissipates the high energy charge of N-phosphocreatine as heat without performing any mechanical or chemical work. The protein is Creatine kinase B-type of Mus musculus (Mouse).